A 1099-amino-acid chain; its full sequence is Probable inorganic carbon transporter subunit DabA (1099 aa).

A disordered region spans residues 175–194; it reads RQGRRRFATTERRTRRTRRS. Residues 176-194 are compositionally biased toward basic residues; the sequence is QGRRRFATTERRTRRTRRS. Cys-514, Asp-516, His-722, and Cys-737 together coordinate Zn(2+). Residues 1071–1099 form a disordered region; it reads AGAGAAQPTRDAIELPEQASGPLPARDGQ.

This sequence belongs to the inorganic carbon transporter (TC 9.A.2) DabA family. Forms a complex with DabB. Zn(2+) serves as cofactor.

Its subcellular location is the cell membrane. Functionally, part of an energy-coupled inorganic carbon pump. The sequence is that of Probable inorganic carbon transporter subunit DabA from Parafrankia sp. (strain EAN1pec).